We begin with the raw amino-acid sequence, 2563 residues long: Highly reducing polyketide synthase 2 (2563 aa).

The Ketosynthase family 3 (KS3) domain occupies 11–451 (MSDIAIVGYS…GSNSHIVLDD (441 aa)). Catalysis depends on for beta-ketoacyl synthase activity residues cysteine 182, histidine 317, and histidine 357. One can recognise a Malonyl-CoA:ACP transacylase (MAT) domain in the interval 589-890 (FAFTGQGAQY…DTLSEMSSAS (302 aa)). The tract at residues 970–1101 (GELLGVRVSD…ANISVEFQDN (132 aa)) is N-terminal hotdog fold. The 300-residue stretch at 970-1269 (GELLGVRVSD…TSAVSGGITH (300 aa)) folds into the PKS/mFAS DH domain. Histidine 1002 (proton acceptor; for dehydratase activity) is an active-site residue. The tract at residues 1126 to 1269 (TLPIDPRVFY…TSAVSGGITH (144 aa)) is C-terminal hotdog fold. Aspartate 1186 (proton donor; for dehydratase activity) is an active-site residue. The tract at residues 1296–1618 (FAANAVPKDD…FSGNDLVIRD (323 aa)) is methyltransferase (CMet) domain. The Enoyl reductase (ER) domain maps to 1858 to 2168 (GSLDSLQFVE…QEDTSERVIV (311 aa)). A Ketoreductase (KR) domain is found at 2192–2370 (STYLVAGGSG…ALSLDIGWMS (179 aa)). The 82-residue stretch at 2480–2561 (SDARERQQVV…GVAEVVEARS (82 aa)) folds into the Carrier domain. An O-(pantetheine 4'-phosphoryl)serine modification is found at serine 2521.

It depends on pantetheine 4'-phosphate as a cofactor.

It functions in the pathway secondary metabolite biosynthesis. Highly reducing polyketide synthase; part of the gene cluster that mediates the biosynthesis of the tetraketides fugralins such as linear fugralin A and cyclic fugralin B, volatile compounds that play a role in the asexual reproductive cycle but are not involved in pathogenicity. One of the key features of fugralins is the presence of a double methyl group, which is only rarely encountered in fungal secondary metabolites. As the fugralins cluster does not contain an independent methyltransferase, the PKS FGR1 is probably responsible for adding two methyl groups to the same carbon atom. Fugralin B is similar to fugralin A except for a cyclization between the carboxylic acid C-8 and the alcohol on C-4 resulting in a six membered lactone ring, probably catalyzed by the cyclase FGR4. The exact role of the individual cluster genes remains unknown and further work is needed to unravel the biosynthetic pathway. In Gibberella zeae (strain ATCC MYA-4620 / CBS 123657 / FGSC 9075 / NRRL 31084 / PH-1) (Wheat head blight fungus), this protein is Highly reducing polyketide synthase 2.